The sequence spans 196 residues: Rac-like GTP-binding protein RAC13 (196 aa).

GTP is bound at residue Gly13–Thr20. Positions Tyr35–Phe43 match the Effector region motif. GTP-binding positions include Asp60–Gln64 and Thr118–Asp121. Cys193 is modified (cysteine methyl ester). Cys193 carries S-geranylgeranyl cysteine lipidation. Positions Ala194–Leu196 are cleaved as a propeptide — removed in mature form.

It belongs to the small GTPase superfamily. Rho family.

Its subcellular location is the cytoplasm. The protein localises to the membrane. Could participate in a signal transduction pathway that controls cytoskeletal organization. Functionally, inactive GDP-bound Rho GTPases reside in the cytosol, are found in a complex with Rho GDP-dissociation inhibitors (Rho GDIs), and are released from the GDI protein in order to translocate to membranes upon activation. The polypeptide is Rac-like GTP-binding protein RAC13 (RAC13) (Gossypium hirsutum (Upland cotton)).